Consider the following 86-residue polypeptide: YcgL domain-containing protein XCV4171 (86 aa).

The region spanning 1-83 (MHAYVYKSQR…PKTIVLAGEC (83 aa)) is the YcgL domain.

The sequence is that of YcgL domain-containing protein XCV4171 from Xanthomonas euvesicatoria pv. vesicatoria (strain 85-10) (Xanthomonas campestris pv. vesicatoria).